A 176-amino-acid chain; its full sequence is 3-hydroxydecanoyl-[acyl-carrier-protein] dehydratase (176 aa).

The active site involves histidine 71.

It belongs to the thioester dehydratase family. FabA subfamily. In terms of assembly, homodimer.

It localises to the cytoplasm. The enzyme catalyses a (3R)-hydroxyacyl-[ACP] = a (2E)-enoyl-[ACP] + H2O. The catalysed reaction is (3R)-hydroxydecanoyl-[ACP] = (2E)-decenoyl-[ACP] + H2O. It catalyses the reaction (2E)-decenoyl-[ACP] = (3Z)-decenoyl-[ACP]. Its pathway is lipid metabolism; fatty acid biosynthesis. Functionally, necessary for the introduction of cis unsaturation into fatty acids. Catalyzes the dehydration of (3R)-3-hydroxydecanoyl-ACP to E-(2)-decenoyl-ACP and then its isomerization to Z-(3)-decenoyl-ACP. Can catalyze the dehydratase reaction for beta-hydroxyacyl-ACPs with saturated chain lengths up to 16:0, being most active on intermediate chain length. The sequence is that of 3-hydroxydecanoyl-[acyl-carrier-protein] dehydratase from Rhodopseudomonas palustris (strain BisA53).